Reading from the N-terminus, the 72-residue chain is UPF0270 protein YheU (72 aa).

The protein belongs to the UPF0270 family.

This Escherichia coli (strain UTI89 / UPEC) protein is UPF0270 protein YheU.